The chain runs to 166 residues: Lipoprotein signal peptidase (166 aa).

The next 3 membrane-spanning stretches (helical) occupy residues 12–32 (WLWLVVVVLIIDLGSKYLILQ), 70–90 (WFFAGIAIGICVILLVMMYRS), and 102–122 (ALIIGGALGNLFDRLWHGFVV). Catalysis depends on residues D123 and D141. A helical transmembrane segment spans residues 137–157 (FNLADTAICIGAALIVLEGFL).

The protein belongs to the peptidase A8 family.

The protein resides in the cell inner membrane. It catalyses the reaction Release of signal peptides from bacterial membrane prolipoproteins. Hydrolyzes -Xaa-Yaa-Zaa-|-(S,diacylglyceryl)Cys-, in which Xaa is hydrophobic (preferably Leu), and Yaa (Ala or Ser) and Zaa (Gly or Ala) have small, neutral side chains.. The protein operates within protein modification; lipoprotein biosynthesis (signal peptide cleavage). Its function is as follows. This protein specifically catalyzes the removal of signal peptides from prolipoproteins. This chain is Lipoprotein signal peptidase, found in Salmonella paratyphi A (strain ATCC 9150 / SARB42).